Reading from the N-terminus, the 346-residue chain is NADH-ubiquinone oxidoreductase chain 2 (346 aa).

11 helical membrane passes run 1 to 21 (MSPY…MLIS), 26 to 46 (WVFM…ILVW), 60 to 80 (FIVQ…SLSG), 96 to 116 (MMIM…YWVV), 122 to 142 (LNYI…LAVL), 151 to 171 (SSML…GGLG), 178 to 198 (LLAF…VAGS), 199 to 219 (LLGL…FSIL), 242 to 262 (VLLG…GFFG), 274 to 294 (LLLG…FYYL), and 320 to 340 (LSGL…LVGG).

This sequence belongs to the complex I subunit 2 family.

The protein localises to the mitochondrion inner membrane. It carries out the reaction a ubiquinone + NADH + 5 H(+)(in) = a ubiquinol + NAD(+) + 4 H(+)(out). Core subunit of the mitochondrial membrane respiratory chain NADH dehydrogenase (Complex I) that is believed to belong to the minimal assembly required for catalysis. Complex I functions in the transfer of electrons from NADH to the respiratory chain. The immediate electron acceptor for the enzyme is believed to be ubiquinone. This chain is NADH-ubiquinone oxidoreductase chain 2 (ND2), found in Branchiostoma floridae (Florida lancelet).